The chain runs to 332 residues: uncharacterized protein (332 aa).

The first 26 residues, 1 to 26 (MSSLGKLLKLTLLGILLSFSCKFVFG), serve as a signal peptide directing secretion.

The protein resides in the endoplasmic reticulum. This is an uncharacterized protein from Schizosaccharomyces pombe (strain 972 / ATCC 24843) (Fission yeast).